A 149-amino-acid polypeptide reads, in one-letter code: Large ribosomal subunit protein bL20m (149 aa).

Residues 1–9 (MVFLSAPLW) constitute a mitochondrion transit peptide.

This sequence belongs to the bacterial ribosomal protein bL20 family. As to quaternary structure, component of the mitochondrial ribosome large subunit (39S) which comprises a 16S rRNA and about 50 distinct proteins. Interacts with OXA1L.

It is found in the mitochondrion. The chain is Large ribosomal subunit protein bL20m (MRPL20) from Bos taurus (Bovine).